The following is a 492-amino-acid chain: Protein adenylyltransferase Fic (492 aa).

The segment covering 1–17 (MCMEAEPPSPPAQQQEQ) has biased composition (low complexity). The disordered stretch occupies residues 1–21 (MCMEAEPPSPPAQQQEQVNPP). The chain crosses the membrane as a helical span at residues 33–55 (LYRLVLLFVAGSLAAWTFHALSS). TPR repeat units follow at residues 118–151 (ALGA…APRH) and 152–186 (PEVL…SPSN). The short motif at 243 to 248 (SVGIEG) is the Inhibitory (S/T)XXXE(G/N) motif element. Residues Glu247 and 328–331 (VGGH) each bind ATP. The Fido domain maps to 297–432 (ITIKDILELH…IRPFVRFIAD (136 aa)). Residue His375 is part of the active site. ATP-binding positions include 379 to 386 (DGNGRTSR), 411 to 412 (YY), and Asn419.

It belongs to the fic family. Homodimer.

It is found in the membrane. It carries out the reaction L-tyrosyl-[protein] + ATP = O-(5'-adenylyl)-L-tyrosyl-[protein] + diphosphate. The enzyme catalyses L-threonyl-[protein] + ATP = 3-O-(5'-adenylyl)-L-threonyl-[protein] + diphosphate. It catalyses the reaction 3-O-(5'-adenylyl)-L-threonyl-[protein] + H2O = L-threonyl-[protein] + AMP + H(+). Its activity is regulated as follows. The side chain of Glu-247 determines which of the two opposing activities (AMPylase or de-AMPylase) will take place. In response to endoplasmic reticulum stress, mediates de-AMPylase activity. Adenylyltransferase activity is inhibited by the inhibitory helix present at the N-terminus: Glu-247 binds ATP and competes with ATP-binding at Arg-386, thereby preventing adenylyltransferase activity. In unstressed cells, disengagement of Glu-247 promotes adenylyltransferase activity. Activation dissociates ATP-binding from Glu-247, allowing ordered binding of the entire ATP moiety with the alpha-phosphate in an orientation that is productive for accepting an incoming target hydroxyl side chain. Functionally, protein that can both mediate the addition of adenosine 5'-monophosphate (AMP) to specific residues of target proteins (AMPylation), and the removal of the same modification from target proteins (de-AMPylation), depending on the context. The side chain of Glu-247 determines which of the two opposing activities (AMPylase or de-AMPylase) will take place. Acts as a key regulator of the unfolded protein response (UPR) by mediating AMPylation or de-AMPylation of Hsc70-3/BiP. In unstressed cells, acts as an adenylyltransferase by mediating AMPylation of Hsc70-3/BiP at 'Thr-518', thereby inactivating it. In response to endoplasmic reticulum stress, acts as a phosphodiesterase by mediating removal of ATP (de-AMPylation) from Hsc70-3/BiP at 'Thr-518', leading to restore HSPA5/BiP activity. The polypeptide is Protein adenylyltransferase Fic (Drosophila simulans (Fruit fly)).